A 692-amino-acid chain; its full sequence is A-type ATP synthase subunit I (692 aa).

The next 7 membrane-spanning stretches (helical) occupy residues 389-409, 422-442, 494-514, 531-551, 553-573, 602-622, and 624-644; these read GIMLTDAVYGLLLTIIGLFIW, LGYILTLAGISTVIMGIITGG, ILVFSIFVGLIHLLIGLFVGF, GVWILLILSIFVGIGLMFAGA, TMIAGGIIGIFVVLAILASMY, ARLLALCLATGGLAMAVNIMA, and LVGESIPVIGIIVAIIILLVG.

The protein belongs to the V-ATPase 116 kDa subunit family. The A-type ATPase is composed of subunits A(3), B(3), C, D, E(1 or 2), F, H(2), I and K(x).

The protein resides in the cell membrane. Component of the A-type ATP synthase that produces ATP from ADP in the presence of a proton gradient across the membrane. This chain is A-type ATP synthase subunit I, found in Methanocaldococcus jannaschii (strain ATCC 43067 / DSM 2661 / JAL-1 / JCM 10045 / NBRC 100440) (Methanococcus jannaschii).